The primary structure comprises 94 residues: Serine protease inhibitor Kazal-type 13 (94 aa).

The signal sequence occupies residues 1–23 (MAAFPHKIIFFLVCSTLTHVAFS). In terms of domain architecture, Kazal-like spans 33-94 (RWPKPRCKMY…IKFEKYGKCD (62 aa)). 3 cysteine pairs are disulfide-bonded: cysteine 39–cysteine 75, cysteine 53–cysteine 72, and cysteine 61–cysteine 93. N-linked (GlcNAc...) asparagine glycosylation is present at asparagine 55.

The protein resides in the secreted. In terms of biological role, may be a serine protease inhibitor. Essential for sperm maturation and fertility. Inhibits sperm acrosome reaction, protecting sperm from premature reaction. The sequence is that of Serine protease inhibitor Kazal-type 13 (SPINK13) from Homo sapiens (Human).